Here is a 450-residue protein sequence, read N- to C-terminus: Glucose-6-phosphate isomerase (450 aa).

Thr39 bears the Phosphothreonine mark. Glu291 serves as the catalytic Proton donor. Catalysis depends on residues His312 and Lys426.

It belongs to the GPI family.

The protein resides in the cytoplasm. It carries out the reaction alpha-D-glucose 6-phosphate = beta-D-fructose 6-phosphate. The protein operates within carbohydrate biosynthesis; gluconeogenesis. Its pathway is carbohydrate degradation; glycolysis; D-glyceraldehyde 3-phosphate and glycerone phosphate from D-glucose: step 2/4. In terms of biological role, catalyzes the reversible isomerization of glucose-6-phosphate to fructose-6-phosphate. This Halalkalibacterium halodurans (strain ATCC BAA-125 / DSM 18197 / FERM 7344 / JCM 9153 / C-125) (Bacillus halodurans) protein is Glucose-6-phosphate isomerase.